The primary structure comprises 147 residues: D-aminoacyl-tRNA deacylase (147 aa).

A Gly-cisPro motif, important for rejection of L-amino acids motif is present at residues 136–137 (GP).

This sequence belongs to the DTD family. Homodimer.

It is found in the cytoplasm. The catalysed reaction is glycyl-tRNA(Ala) + H2O = tRNA(Ala) + glycine + H(+). The enzyme catalyses a D-aminoacyl-tRNA + H2O = a tRNA + a D-alpha-amino acid + H(+). In terms of biological role, an aminoacyl-tRNA editing enzyme that deacylates mischarged D-aminoacyl-tRNAs. Also deacylates mischarged glycyl-tRNA(Ala), protecting cells against glycine mischarging by AlaRS. Acts via tRNA-based rather than protein-based catalysis; rejects L-amino acids rather than detecting D-amino acids in the active site. By recycling D-aminoacyl-tRNA to D-amino acids and free tRNA molecules, this enzyme counteracts the toxicity associated with the formation of D-aminoacyl-tRNA entities in vivo and helps enforce protein L-homochirality. The polypeptide is D-aminoacyl-tRNA deacylase (Streptococcus pneumoniae serotype 2 (strain D39 / NCTC 7466)).